The following is a 120-amino-acid chain: NAD(P)H-quinone oxidoreductase subunit 3 (120 aa).

3 consecutive transmembrane segments (helical) span residues 6-26 (GYDA…LALV), 64-84 (MFAL…PWAV), and 89-109 (LGLL…VALA).

Belongs to the complex I subunit 3 family. NDH-1 can be composed of about 15 different subunits; different subcomplexes with different compositions have been identified which probably have different functions.

The protein localises to the cellular thylakoid membrane. It catalyses the reaction a plastoquinone + NADH + (n+1) H(+)(in) = a plastoquinol + NAD(+) + n H(+)(out). The enzyme catalyses a plastoquinone + NADPH + (n+1) H(+)(in) = a plastoquinol + NADP(+) + n H(+)(out). NDH-1 shuttles electrons from an unknown electron donor, via FMN and iron-sulfur (Fe-S) centers, to quinones in the respiratory and/or the photosynthetic chain. The immediate electron acceptor for the enzyme in this species is believed to be plastoquinone. Couples the redox reaction to proton translocation, and thus conserves the redox energy in a proton gradient. Cyanobacterial NDH-1 also plays a role in inorganic carbon-concentration. In Prochlorococcus marinus (strain MIT 9211), this protein is NAD(P)H-quinone oxidoreductase subunit 3.